An 88-amino-acid polypeptide reads, in one-letter code: Acyl-CoA-binding protein homolog (88 aa).

In terms of domain architecture, ACB spans 3-88; that stretch reads PQADFDKAAG…AHELIEKYGL (86 aa). An acyl-CoA-binding positions include Lys15, 30-34, Lys52, Lys56, and Tyr75; that span reads YGLYK.

The protein belongs to the ACBP family. In terms of tissue distribution, brain. Is selectively expressed in glial cells.

Its subcellular location is the endoplasmic reticulum. It localises to the golgi apparatus. In terms of biological role, may play important functions in the control of brain and pituitary activities. May regulate GABA neurotransmission through a paracrine and/or autocrine mechanism. May not bind acyl-CoA esters. The sequence is that of Acyl-CoA-binding protein homolog from Pelophylax ridibundus (Marsh frog).